Here is a 346-residue protein sequence, read N- to C-terminus: Peripherin-2 (346 aa).

Over M1–N24 the chain is Cytoplasmic. A helical transmembrane segment spans residues W25–I43. The Lumenal segment spans residues E44 to P61. N53 carries N-linked (GlcNAc...) asparagine glycosylation. A helical transmembrane segment spans residues N62 to K80. Topologically, residues I81–K99 are cytoplasmic. The helical transmembrane segment at P100–R123 threads the bilayer. The Lumenal segment spans residues G124 to S264. N-linked (GlcNAc...) asparagine glycosylation occurs at N229. The helical transmembrane segment at M265–L290 threads the bilayer. The Cytoplasmic portion of the chain corresponds to E291–G346. The tract at residues Q341–G346 is interaction with MREG.

The protein belongs to the PRPH2/ROM1 family. In terms of assembly, homodimer; disulfide-linked. Forms a homotetramer. Forms a heterotetramer with ROM1. Homotetramer and heterotetramer core complexes go on to form higher order complexes by formation of intermolecular disulfide bonds. Interacts with MREG. Interacts with STX3. Interacts with SNAP25. As to expression, retina (photoreceptor). In rim region of ROS (rod outer segment) disks.

The protein resides in the membrane. The protein localises to the cell projection. It localises to the cilium. It is found in the photoreceptor outer segment. Its subcellular location is the photoreceptor inner segment. Functionally, essential for retina photoreceptor outer segment disk morphogenesis, may also play a role with ROM1 in the maintenance of outer segment disk structure. Required for the maintenance of retinal outer nuclear layer thickness. Required for the correct development and organization of the photoreceptor inner segment. The sequence is that of Peripherin-2 (PRPH2) from Canis lupus familiaris (Dog).